A 137-amino-acid polypeptide reads, in one-letter code: Large ribosomal subunit protein uL16 (137 aa).

Belongs to the universal ribosomal protein uL16 family. In terms of assembly, part of the 50S ribosomal subunit.

Its function is as follows. Binds 23S rRNA and is also seen to make contacts with the A and possibly P site tRNAs. The sequence is that of Large ribosomal subunit protein uL16 from Pseudomonas entomophila (strain L48).